A 420-amino-acid polypeptide reads, in one-letter code: 20-oxo-5-O-mycaminosyltylactone 23-monooxygenase (420 aa).

Residues 1–28 (MSSSGDARPSQKGILLPAARANDTDEAA) are disordered. Heme-binding residues include His118, Arg122, Arg311, His367, and Cys369.

Belongs to the cytochrome P450 family.

The catalysed reaction is 20-oxo-5-O-beta-D-mycaminosyltylonolide + 2 reduced [2Fe-2S]-[ferredoxin] + O2 + 2 H(+) = 5-O-beta-D-mycaminosyltylonolide + 2 oxidized [2Fe-2S]-[ferredoxin] + H2O. Its pathway is antibiotic biosynthesis; tylosin biosynthesis. In terms of biological role, involved in the biosynthesis of the complex macrolide antibiotic tylosin. Catalyzes the hydroxylation of 20-oxo-5-O-beta-mycaminosyltylactone at the C-23 position to yield 5-O-beta-mycaminosyltylonolide. This Streptomyces fradiae (Streptomyces roseoflavus) protein is 20-oxo-5-O-mycaminosyltylactone 23-monooxygenase.